Here is a 484-residue protein sequence, read N- to C-terminus: Glutamate--tRNA ligase (484 aa).

The 'HIGH' region signature appears at 11–21 (PSPTGLLHIGN). The short motif at 255-259 (KLSKR) is the 'KMSKS' region element. Lys-258 serves as a coordination point for ATP.

Belongs to the class-I aminoacyl-tRNA synthetase family. Glutamate--tRNA ligase type 1 subfamily. Monomer.

It localises to the cytoplasm. The enzyme catalyses tRNA(Glu) + L-glutamate + ATP = L-glutamyl-tRNA(Glu) + AMP + diphosphate. In terms of biological role, catalyzes the attachment of glutamate to tRNA(Glu) in a two-step reaction: glutamate is first activated by ATP to form Glu-AMP and then transferred to the acceptor end of tRNA(Glu). The protein is Glutamate--tRNA ligase of Streptococcus suis (strain 98HAH33).